Here is a 144-residue protein sequence, read N- to C-terminus: 3-hydroxyacyl-[acyl-carrier-protein] dehydratase FabZ (144 aa).

Histidine 49 is an active-site residue.

This sequence belongs to the thioester dehydratase family. FabZ subfamily.

Its subcellular location is the cytoplasm. The enzyme catalyses a (3R)-hydroxyacyl-[ACP] = a (2E)-enoyl-[ACP] + H2O. Functionally, involved in unsaturated fatty acids biosynthesis. Catalyzes the dehydration of short chain beta-hydroxyacyl-ACPs and long chain saturated and unsaturated beta-hydroxyacyl-ACPs. This Clostridium kluyveri (strain NBRC 12016) protein is 3-hydroxyacyl-[acyl-carrier-protein] dehydratase FabZ.